The following is a 669-amino-acid chain: Glycerol uptake/efflux facilitator protein (669 aa).

Residues 1–16 are compositionally biased toward polar residues; it reads MSNPQKALNDFLSSES. Disordered stretches follow at residues 1 to 99 and 123 to 147; these read MSNP…TYVP and QDIN…RGQT. The Extracellular segment spans residues 1-254; sequence MSNPQKALND…WSSVKNTYLK (254 aa). Over residues 50-68 the composition is skewed to low complexity; it reads NNNNNNNNNNNNSNNNNNG. Residues 72 to 81 are compositionally biased toward acidic residues; the sequence is GNDDDYDYEM. Polar residues-rich tracts occupy residues 87–99 and 133–147; these read SPQS…TYVP and PSAS…RGQT. Ser150 bears the Phosphoserine mark. The segment at 167–215 is disordered; it reads HTIPESHLSRRRSRSRATSNAGHSANTGATNGRTTGAQTNMESNESPRN. At Thr168 the chain carries Phosphothreonine. Positions 191–206 are enriched in low complexity; the sequence is ANTGATNGRTTGAQTN. Ser209 and Ser212 each carry phosphoserine. The chain crosses the membrane as a helical span at residues 255 to 275; that stretch reads EFLAEFMGTMVMIIFGSAVVC. Residues 276 to 325 lie on the Cytoplasmic side of the membrane; it reads QVNVAGKIQQDNFNVALDNLNVTGSSAETIDAMKSLTSLVSSVAGGTFDD. The helical transmembrane segment at 326–346 threads the bilayer; it reads VALGWAAAVVMGYFCAGGSAI. The Extracellular portion of the chain corresponds to 347 to 369; the sequence is SGAHLNPSITLANLVYRGFPLKK. The NPA 1 motif lies at 352-354; sequence NPS. Residues 370–390 form a helical membrane-spanning segment; sequence VPYYFAGQLIGAFTGALILFI. Over 391 to 446 the chain is Cytoplasmic; it reads WYKRVLQEAYSDWWMNESVAGMFCVFPKPYLSSGRQFFSEFLCGAMLQAGTFALTD. A helical transmembrane segment spans residues 447-467; the sequence is PYTCLSSDVFPLMMFILIFII. The Extracellular portion of the chain corresponds to 468 to 506; the sequence is NASMAYQTGTAMNLARDLGPRLALYAVGFDHKMLWVHHH. The NPA 2 signature appears at 480 to 482; it reads NLA. A helical transmembrane segment spans residues 507–527; that stretch reads HFFWVPMVGPFIGALMGGLVY. At 528–669 the chain is on the cytoplasmic side; that stretch reads DVCIYQGHES…SHYGNAKKVT (142 aa). Disordered stretches follow at residues 591-615 and 635-669; these read LQKT…VQFK and DSIE…KKVT. Over residues 638 to 655 the composition is skewed to polar residues; it reads ETASLGATTTDSIGLSDT.

It belongs to the MIP/aquaporin (TC 1.A.8) family.

Its subcellular location is the membrane. Functionally, channel protein for glycerol. Has a role in both glycerol influx and efflux. Plays a role in osmoregulation: under osmotic stress the channel is apparently closed to allow accumulation of glycerol in the cell under hyperosmotic conditions. In Saccharomyces cerevisiae (strain ATCC 204508 / S288c) (Baker's yeast), this protein is Glycerol uptake/efflux facilitator protein (FPS1).